The following is a 475-amino-acid chain: Aspartyl/glutamyl-tRNA(Asn/Gln) amidotransferase subunit B (475 aa).

Belongs to the GatB/GatE family. GatB subfamily. Heterotrimer of A, B and C subunits.

It carries out the reaction L-glutamyl-tRNA(Gln) + L-glutamine + ATP + H2O = L-glutaminyl-tRNA(Gln) + L-glutamate + ADP + phosphate + H(+). The catalysed reaction is L-aspartyl-tRNA(Asn) + L-glutamine + ATP + H2O = L-asparaginyl-tRNA(Asn) + L-glutamate + ADP + phosphate + 2 H(+). In terms of biological role, allows the formation of correctly charged Asn-tRNA(Asn) or Gln-tRNA(Gln) through the transamidation of misacylated Asp-tRNA(Asn) or Glu-tRNA(Gln) in organisms which lack either or both of asparaginyl-tRNA or glutaminyl-tRNA synthetases. The reaction takes place in the presence of glutamine and ATP through an activated phospho-Asp-tRNA(Asn) or phospho-Glu-tRNA(Gln). The polypeptide is Aspartyl/glutamyl-tRNA(Asn/Gln) amidotransferase subunit B (Pediococcus pentosaceus (strain ATCC 25745 / CCUG 21536 / LMG 10740 / 183-1w)).